Consider the following 132-residue polypeptide: Succinate dehydrogenase cytochrome b560 subunit (132 aa).

A run of 2 helical transmembrane segments spans residues 32 to 49 and 59 to 81; these read LYLV…KFLF and KFVK…FSMY. His86 contacts heme. A helical membrane pass occupies residues 107–127; it reads VTMSTKLSLSLSLVLVLINCL.

It belongs to the cytochrome b560 family. In terms of assembly, forms part of complex II containing four subunits: a 70 kDa flavoprotein (FP), a 27 kDa iron-sulfur protein (IP), a cytochrome B and a membrane-anchoring protein. Requires heme as cofactor.

The protein localises to the mitochondrion inner membrane. The protein operates within carbohydrate metabolism; tricarboxylic acid cycle. Its function is as follows. Membrane-anchoring subunit of succinate dehydrogenase (SDH) that is involved in complex II of the mitochondrial electron transport chain and is responsible for transferring electrons from succinate to ubiquinone (coenzyme Q). The polypeptide is Succinate dehydrogenase cytochrome b560 subunit (SDH3) (Cyanidium caldarium (Red alga)).